The sequence spans 194 residues: Flagellar transcriptional regulator FlhC (194 aa).

Cys139, Cys142, Cys159, and Cys162 together coordinate Zn(2+).

The protein belongs to the FlhC family. Heterohexamer composed of two FlhC and four FlhD subunits. Each FlhC binds a FlhD dimer, forming a heterotrimer, and a hexamer assembles by dimerization of two heterotrimers. The cofactor is Zn(2+).

It localises to the cytoplasm. In terms of biological role, functions in complex with FlhD as a master transcriptional regulator that regulates transcription of several flagellar and non-flagellar operons by binding to their promoter region. Activates expression of class 2 flagellar genes, including fliA, which is a flagellum-specific sigma factor that turns on the class 3 genes. Also regulates genes whose products function in a variety of physiological pathways. The polypeptide is Flagellar transcriptional regulator FlhC (Xenorhabdus nematophila (Achromobacter nematophilus)).